Reading from the N-terminus, the 236-residue chain is CHD1 helical C-terminal domain containing protein 1 (236 aa).

Residues 1-29 (MEASDWQGGEGDKPLEKVGSVPCLERSSS) are disordered. The CHD1 helical C-terminal domain (CHCT) stretch occupies residues 44–145 (LSQDTFKICK…TNQTAKFLAA (102 aa)). Residues 197–236 (LEEPRSSHCSRGDSLRKLPQKPKLKKKRIKERLESPKSCS) are disordered. Over residues 198 to 212 (EEPRSSHCSRGDSLR) the composition is skewed to basic and acidic residues. Residues 214–226 (LPQKPKLKKKRIK) show a composition bias toward basic residues. The segment covering 227–236 (ERLESPKSCS) has biased composition (basic and acidic residues).

As to expression, exclusively expressed in testes.

Its subcellular location is the cytoplasm. The protein resides in the nucleus. In terms of biological role, may play a role in regulation of apoptosis. The polypeptide is CHD1 helical C-terminal domain containing protein 1 (Chct1) (Mus musculus (Mouse)).